Reading from the N-terminus, the 162-residue chain is 2-C-methyl-D-erythritol 2,4-cyclodiphosphate synthase (162 aa).

2 residues coordinate a divalent metal cation: Asp12 and His14. Residues 12 to 14 (DVH) and 38 to 39 (HS) each bind 4-CDP-2-C-methyl-D-erythritol 2-phosphate. His46 serves as a coordination point for a divalent metal cation. 4-CDP-2-C-methyl-D-erythritol 2-phosphate is bound by residues 60 to 62 (DIG), 65 to 69 (FPDTD), and Arg146.

The protein belongs to the IspF family. In terms of assembly, homotrimer. A divalent metal cation serves as cofactor.

The catalysed reaction is 4-CDP-2-C-methyl-D-erythritol 2-phosphate = 2-C-methyl-D-erythritol 2,4-cyclic diphosphate + CMP. The protein operates within isoprenoid biosynthesis; isopentenyl diphosphate biosynthesis via DXP pathway; isopentenyl diphosphate from 1-deoxy-D-xylulose 5-phosphate: step 4/6. Involved in the biosynthesis of isopentenyl diphosphate (IPP) and dimethylallyl diphosphate (DMAPP), two major building blocks of isoprenoid compounds. Catalyzes the conversion of 4-diphosphocytidyl-2-C-methyl-D-erythritol 2-phosphate (CDP-ME2P) to 2-C-methyl-D-erythritol 2,4-cyclodiphosphate (ME-CPP) with a corresponding release of cytidine 5-monophosphate (CMP). This is 2-C-methyl-D-erythritol 2,4-cyclodiphosphate synthase from Bordetella bronchiseptica (strain ATCC BAA-588 / NCTC 13252 / RB50) (Alcaligenes bronchisepticus).